A 310-amino-acid polypeptide reads, in one-letter code: HPr kinase/phosphorylase (310 aa).

Residues His-136 and Lys-157 contribute to the active site. Residue 151-158 coordinates ATP; that stretch reads GDSGIGKS. Mg(2+) is bound at residue Ser-158. The active-site Proton acceptor; for phosphorylation activity. Proton donor; for dephosphorylation activity is Asp-175. Residues 199–208 are important for the catalytic mechanism of both phosphorylation and dephosphorylation; sequence LEIRGLGIIN. Glu-200 contributes to the Mg(2+) binding site. Residue Arg-241 is part of the active site. The important for the catalytic mechanism of dephosphorylation stretch occupies residues 262-267; that stretch reads PVRPGR.

It belongs to the HPrK/P family. As to quaternary structure, homohexamer. The cofactor is Mg(2+).

It carries out the reaction [HPr protein]-L-serine + ATP = [HPr protein]-O-phospho-L-serine + ADP + H(+). It catalyses the reaction [HPr protein]-O-phospho-L-serine + phosphate + H(+) = [HPr protein]-L-serine + diphosphate. Catalyzes the ATP- as well as the pyrophosphate-dependent phosphorylation of a specific serine residue in HPr, a phosphocarrier protein of the phosphoenolpyruvate-dependent sugar phosphotransferase system (PTS). HprK/P also catalyzes the pyrophosphate-producing, inorganic phosphate-dependent dephosphorylation (phosphorolysis) of seryl-phosphorylated HPr (P-Ser-HPr). The two antagonistic activities of HprK/P are regulated by several intracellular metabolites, which change their concentration in response to the absence or presence of rapidly metabolisable carbon sources (glucose, fructose, etc.) in the growth medium. Therefore, by controlling the phosphorylation state of HPr, HPrK/P is a sensor enzyme that plays a major role in the regulation of carbon metabolism and sugar transport: it mediates carbon catabolite repression (CCR), and regulates PTS-catalyzed carbohydrate uptake and inducer exclusion. The sequence is that of HPr kinase/phosphorylase from Staphylococcus aureus (strain Mu3 / ATCC 700698).